The primary structure comprises 560 residues: Putative transport protein ESA_02488 (560 aa).

The next 5 helical transmembrane spans lie at 8 to 28, 32 to 52, 66 to 86, 91 to 111, and 158 to 178; these read LLNG…LCLG, LGSV…LLGQ, FMLF…SIFF, NYLM…LGLG, and HLSL…IFGA. RCK C-terminal domains follow at residues 200 to 288 and 292 to 373; these read RGLD…SFRN and VFDR…RIGF. The next 5 membrane-spanning stretches (helical) occupy residues 383–403, 406–426, 447–467, 475–495, and 539–559; these read LLAF…TFQF, FSFG…LGFL, FGLM…IGHG, MLFA…LFGA, and YAIA…IWPG.

It belongs to the AAE transporter (TC 2.A.81) family. YbjL subfamily.

The protein resides in the cell membrane. The polypeptide is Putative transport protein ESA_02488 (Cronobacter sakazakii (strain ATCC BAA-894) (Enterobacter sakazakii)).